The chain runs to 652 residues: Acetyl-coenzyme A synthetase (652 aa).

CoA contacts are provided by residues Arg191–Arg194, Thr311, and Asn335. ATP contacts are provided by residues Gly387–Pro389, Asp411–Thr416, Asp500, and Arg515. Ser523 is a CoA binding site. Position 526 (Arg526) interacts with ATP. Mg(2+) is bound by residues Val537, His539, and Ile542. Residue Arg584 coordinates CoA. Residue Lys609 is modified to N6-acetyllysine.

This sequence belongs to the ATP-dependent AMP-binding enzyme family. It depends on Mg(2+) as a cofactor. Acetylated. Deacetylation by the SIR2-homolog deacetylase activates the enzyme.

The catalysed reaction is acetate + ATP + CoA = acetyl-CoA + AMP + diphosphate. Catalyzes the conversion of acetate into acetyl-CoA (AcCoA), an essential intermediate at the junction of anabolic and catabolic pathways. Acs undergoes a two-step reaction. In the first half reaction, Acs combines acetate with ATP to form acetyl-adenylate (AcAMP) intermediate. In the second half reaction, it can then transfer the acetyl group from AcAMP to the sulfhydryl group of CoA, forming the product AcCoA. Its function is as follows. Enables the cell to use acetate during aerobic growth to generate energy via the TCA cycle, and biosynthetic compounds via the glyoxylate shunt. Acetylates CheY, the response regulator involved in flagellar movement and chemotaxis. The protein is Acetyl-coenzyme A synthetase of Salmonella typhi.